The primary structure comprises 475 residues: Beta-amyrin 6-beta-monooxygenase (475 aa).

A helical membrane pass occupies residues 6 to 22 (LYSLAFALVYISLYFIF). Cys-423 is a binding site for heme.

This sequence belongs to the cytochrome P450 family. It depends on heme as a cofactor. As to expression, specifically expressed in roots.

It localises to the membrane. The enzyme catalyses beta-amyrin + reduced [NADPH--hemoprotein reductase] + O2 = daturadiol + oxidized [NADPH--hemoprotein reductase] + H2O + H(+). Functionally, catalyzes the C-6 beta-hydroxylation of beta-amyrin to form daturadiol. Catalyzes the C-6 beta-hydroxylation of alpha-amyrin to form 6-beta-hydroxy-alpha-amyrin. This chain is Beta-amyrin 6-beta-monooxygenase, found in Solanum lycopersicum (Tomato).